Consider the following 445-residue polypeptide: MANPVGAIRQRCAAIGEQLQGVDWLRVAVDFPLYVAERFRRDACLQNAATLSYTTLLALVPLLTIGLSIFAAFPVFSGLTEQMLDLLFENLVPASTAVVQQHLEDFVGRAAGLTVVGLLALMVSALLMMAAIDRAMNDIWRVQQRRRPLHGFMVYWTVLTLAPILMGASLGISSYVISVTRFGELEALSGLQGLLLAGMPFVAETVAFTFLYAAVPNFRVPLRHALLGGLLAAALFEAAKGGFGWYVANIPTYEAIYGALAALPIFLIWLYLSWVVVLVGAEFTQALASYSVARHRAAGTGRDAFRLAVRVLGHLWRAQREGRGLSTRALSRLEPAAGEMGVLQVLRPLRRARAIQLNGEGEWMLARDPSHYTLLDLYRSEAFPLPSVAALRKDGDDWDQRLADSLAQADTGLASGLAESLDDIFTSRPQIRPVVRQANSPSEER.

Helical transmembrane passes span 56-76 (LLAL…FPVF), 112-132 (GLTV…MAAI), 152-172 (FMVY…SLGI), 195-215 (LLAG…YAAV), 225-245 (ALLG…GFGW), and 259-279 (ALAA…VVLV).

Belongs to the UPF0761 family.

The protein resides in the cell inner membrane. The polypeptide is UPF0761 membrane protein Mlg_0521 (Alkalilimnicola ehrlichii (strain ATCC BAA-1101 / DSM 17681 / MLHE-1)).